The sequence spans 203 residues: Casparian strip membrane protein 1 (203 aa).

A2 carries the post-translational modification N-acetylalanine. The Cytoplasmic segment spans residues 2 to 40 (AKESTTIDVGEPSTVTKSSSHVVKKKGFVAAAAGGGAKR). The chain crosses the membrane as a helical span at residues 41–61 (GLAIFDFLLRLAAIGVTIGAA). Over 62–92 (SVMYTAQETLPFFTQFLQFQAGYDDLPAFQY) the chain is Extracellular. Residues 93–113 (FVIAVAIVASYLVLSLPFSIV) form a helical membrane-spanning segment. At 114–124 (TIVRPLAVAPR) the chain is on the cytoplasmic side. The chain crosses the membrane as a helical span at residues 125–145 (LILLIFDTLVVTLNTSAAAAA). Residues 146-177 (ASIVYLAHNGNQSTNWLPICQQFGDFCQNVST) are Extracellular-facing. 2 N-linked (GlcNAc...) asparagine glycosylation sites follow: N156 and N174. Residues 178–198 (AVVAASIAILFFIVLIIISAI) traverse the membrane as a helical segment. Topologically, residues 199–203 (ALKRH) are cytoplasmic.

The protein belongs to the Casparian strip membrane proteins (CASP) family. In terms of assembly, homodimer and heterodimers.

The protein localises to the cell membrane. Its function is as follows. Regulates membrane-cell wall junctions and localized cell wall deposition. Required for establishment of the Casparian strip membrane domain (CSD) and the subsequent formation of Casparian strips, a cell wall modification of the root endodermis that determines an apoplastic barrier between the intraorganismal apoplasm and the extraorganismal apoplasm and prevents lateral diffusion. The protein is Casparian strip membrane protein 1 of Arabidopsis lyrata subsp. lyrata (Lyre-leaved rock-cress).